The following is a 308-amino-acid chain: Cysteine proteinase 3 (308 aa).

The first 13 residues, 1–13 (MFALILFVSLACA), serve as a signal peptide directing secretion. A propeptide spans 14 to 92 (NEVAFKQWAA…TSNVKAAVKA (79 aa)) (activation peptide). Intrachain disulfides connect C112–C153 and C146–C186. The active site involves C115. Residues H251 and N271 contribute to the active site.

Belongs to the peptidase C1 family.

Its subcellular location is the cytoplasm. It localises to the cytoplasmic vesicle. It is found in the phagosome. It carries out the reaction Hydrolysis of proteins, including basement membrane collagen and azocasein. Preferential cleavage: Arg-Arg-|-Xaa in small molecule substrates including Z-Arg-Arg-|-NHMec.. Functionally, cysteine protease which may be involved in pathogenicity. This is Cysteine proteinase 3 from Entamoeba histolytica (strain ATCC 30459 / HM-1:IMSS / ABRM).